The chain runs to 216 residues: Imidazole glycerol phosphate synthase subunit HisH 1 (216 aa).

The Glutamine amidotransferase type-1 domain occupies 4–216; the sequence is CVLIVDAGLG…LQNFIALNPC (213 aa). Residue C84 is the Nucleophile of the active site. Catalysis depends on residues H195 and E197.

In terms of assembly, heterodimer of HisH and HisF.

Its subcellular location is the cytoplasm. It carries out the reaction 5-[(5-phospho-1-deoxy-D-ribulos-1-ylimino)methylamino]-1-(5-phospho-beta-D-ribosyl)imidazole-4-carboxamide + L-glutamine = D-erythro-1-(imidazol-4-yl)glycerol 3-phosphate + 5-amino-1-(5-phospho-beta-D-ribosyl)imidazole-4-carboxamide + L-glutamate + H(+). The catalysed reaction is L-glutamine + H2O = L-glutamate + NH4(+). It participates in amino-acid biosynthesis; L-histidine biosynthesis; L-histidine from 5-phospho-alpha-D-ribose 1-diphosphate: step 5/9. Its function is as follows. IGPS catalyzes the conversion of PRFAR and glutamine to IGP, AICAR and glutamate. The HisH subunit provides the glutamine amidotransferase activity that produces the ammonia necessary to HisF for the synthesis of IGP and AICAR. In Prochlorococcus marinus (strain MIT 9313), this protein is Imidazole glycerol phosphate synthase subunit HisH 1 (hisH1).